The chain runs to 575 residues: Arginine--tRNA ligase (575 aa).

The 'HIGH' region motif lies at 122–132; sequence PNVAKEMHVGH.

It belongs to the class-I aminoacyl-tRNA synthetase family. In terms of assembly, monomer.

It is found in the cytoplasm. The enzyme catalyses tRNA(Arg) + L-arginine + ATP = L-arginyl-tRNA(Arg) + AMP + diphosphate. The chain is Arginine--tRNA ligase from Actinobacillus succinogenes (strain ATCC 55618 / DSM 22257 / CCUG 43843 / 130Z).